We begin with the raw amino-acid sequence, 471 residues long: Plant intracellular Ras-group-related LRR protein 2 (471 aa).

Residues 106-133 (VVRLDEVHDSYEKKLKDTEEELSRVYST) are a coiled coil. 10 LRR repeats span residues 159-182 (GGTV…FWKV), 183-205 (VGLV…ISKL), 206-229 (KKLE…GMLL), 231-251 (LRIL…IAHC), 253-275 (SLVE…GYGL), 276-298 (QNLE…ISEM), 300-321 (NLKY…IGRL), 324-346 (LEVL…ITDL), 347-369 (TNLR…FYRL), and 371-392 (KLEK…VATQ). A GVYW; degenerate motif is present at residues 393 to 405 (GAEVVREFMRKRW).

Belongs to the SHOC2 family. In terms of tissue distribution, widely expressed but preferentially in roots.

Functionally, leucine-rich repeat protein that likely mediates protein interactions, possibly in the context of signal transduction. This Arabidopsis thaliana (Mouse-ear cress) protein is Plant intracellular Ras-group-related LRR protein 2 (PIRL2).